The primary structure comprises 265 residues: Type III pantothenate kinase (265 aa).

6-13 (DVGNTHTV) contributes to the ATP binding site. 112-115 (GADR) is a binding site for substrate. D114 functions as the Proton acceptor in the catalytic mechanism. K(+) is bound at residue D134. T137 contributes to the ATP binding site. A substrate-binding site is contributed by T189.

Belongs to the type III pantothenate kinase family. Homodimer. NH4(+) serves as cofactor. It depends on K(+) as a cofactor.

It localises to the cytoplasm. It carries out the reaction (R)-pantothenate + ATP = (R)-4'-phosphopantothenate + ADP + H(+). It functions in the pathway cofactor biosynthesis; coenzyme A biosynthesis; CoA from (R)-pantothenate: step 1/5. Functionally, catalyzes the phosphorylation of pantothenate (Pan), the first step in CoA biosynthesis. This chain is Type III pantothenate kinase, found in Streptomyces coelicolor (strain ATCC BAA-471 / A3(2) / M145).